Reading from the N-terminus, the 140-residue chain is Putative cell wall protein (140 aa).

An N-terminal signal peptide occupies residues 1 to 21 (MASSLITSAVIVVVLSLVLGS). Over residues 85 to 98 (TGGGIPSYNGGQGA) the composition is skewed to gly residues. Residues 85-140 (TGGGIPSYNGGQGAGPHTQLPGGDDTLVPNPGFEAPTPTIGAGTGSNGQVPPVPLP) are disordered.

In terms of tissue distribution, inflorescence.

It localises to the secreted. It is found in the cell wall. This is Putative cell wall protein from Arabidopsis thaliana (Mouse-ear cress).